A 350-amino-acid polypeptide reads, in one-letter code: Bifunctional methylenetetrahydrofolate dehydrogenase/cyclohydrolase, mitochondrial (350 aa).

Residues 1-35 (MAAASFITSLVTRLLRSAQSGRLHQRPFHLSAVRN) constitute a mitochondrion transit peptide. Position 50 is an N6-acetyllysine; alternate (K50). K50 participates in a covalent cross-link: Glycyl lysine isopeptide (Lys-Gly) (interchain with G-Cter in SUMO2); alternate. Substrate contacts are provided by residues 84-88 (YVLNK) and 131-133 (VQL). Residues 200–202 (GRS) and R233 contribute to the NAD(+) site. 309 to 313 (PGGVG) is a substrate binding site.

The protein belongs to the tetrahydrofolate dehydrogenase/cyclohydrolase family. In terms of assembly, homodimer. Requires Mg(2+) as cofactor.

The protein localises to the mitochondrion. The catalysed reaction is (6R)-5,10-methylene-5,6,7,8-tetrahydrofolate + NAD(+) = (6R)-5,10-methenyltetrahydrofolate + NADH. It catalyses the reaction (6R)-5,10-methenyltetrahydrofolate + H2O = (6R)-10-formyltetrahydrofolate + H(+). Functionally, although its dehydrogenase activity is NAD-specific, it can also utilize NADP at a reduced efficiency. In Bos taurus (Bovine), this protein is Bifunctional methylenetetrahydrofolate dehydrogenase/cyclohydrolase, mitochondrial (MTHFD2).